A 765-amino-acid chain; its full sequence is ATP-dependent zinc metalloprotease FtsH (765 aa).

Over 1–27 the chain is Cytoplasmic; it reads MSNTSNFNERVTENAKPPKNVKSIIWK. A helical transmembrane segment spans residues 28-48; the sequence is TIGIIIVMAIIIGLILFYVLP. Residues 49–213 are Extracellular-facing; the sequence is RNTIANISNI…NVQLPNQSTA (165 aa). A helical transmembrane segment spans residues 214–234; it reads ILTQFLTSIIPFVILIVIYIV. At 235 to 765 the chain is on the cytoplasmic side; sequence IARRFSRTMG…EPTASTASSN (531 aa). ATP is bound at residue 314–321; that stretch reads GPPGTGKT. Zn(2+) is bound at residue His536. The active site involves Glu537. Zn(2+) contacts are provided by His540 and Asp615. Residues 730 to 748 are compositionally biased toward basic and acidic residues; that stretch reads KAAAEKEEQAEKAKLDHQS. A disordered region spans residues 730-765; that stretch reads KAAAEKEEQAEKAKLDHQSDSAQPQEEPTASTASSN. Polar residues predominate over residues 749-765; sequence DSAQPQEEPTASTASSN.

In the central section; belongs to the AAA ATPase family. The protein in the C-terminal section; belongs to the peptidase M41 family. In terms of assembly, homohexamer. It depends on Zn(2+) as a cofactor.

It localises to the cell membrane. Functionally, acts as a processive, ATP-dependent zinc metallopeptidase for both cytoplasmic and membrane proteins. Plays a role in the quality control of integral membrane proteins. This is ATP-dependent zinc metalloprotease FtsH from Mycoplasmoides gallisepticum (strain R(high / passage 156)) (Mycoplasma gallisepticum).